Reading from the N-terminus, the 635-residue chain is Threonine--tRNA ligase (635 aa).

Positions 1 to 61 (MINISFPDGS…DNDCKLRILT (61 aa)) constitute a TGS domain. The interval 242–533 (DHRKLGRELD…LIEEYAGRFP (292 aa)) is catalytic. Residues Cys-333, His-384, and His-510 each contribute to the Zn(2+) site.

The protein belongs to the class-II aminoacyl-tRNA synthetase family. In terms of assembly, homodimer. The cofactor is Zn(2+).

It localises to the cytoplasm. The enzyme catalyses tRNA(Thr) + L-threonine + ATP = L-threonyl-tRNA(Thr) + AMP + diphosphate + H(+). In terms of biological role, catalyzes the attachment of threonine to tRNA(Thr) in a two-step reaction: L-threonine is first activated by ATP to form Thr-AMP and then transferred to the acceptor end of tRNA(Thr). Also edits incorrectly charged L-seryl-tRNA(Thr). This Rickettsia peacockii (strain Rustic) protein is Threonine--tRNA ligase.